The sequence spans 612 residues: Bile salt-activated lipase (612 aa).

The first 20 residues, 1 to 20, serve as a signal peptide directing secretion; it reads MGRLEVLFLGLTCCLAAACA. C84 and C100 are oxidised to a cystine. An N-linked (GlcNAc...) asparagine glycan is attached at N207. The active-site Acyl-ester intermediate is S214. C266 and C277 are oxidised to a cystine. Residues D340 and H455 each act as charge relay system in the active site. The tract at residues 553-612 is disordered; sequence VGDHTPPEDDSEAAPVPPTDDSQGGPVPPTDDSQTTPVPPTDNSQAGDSVEAQMPGPIGF. 4 repeat units span residues 556–566, 567–577, 578–588, and 589–599. Residues 556–599 are 4 X 11 AA tandem repeats, O-glycosylated region; that stretch reads HTPPEDDSEAAPVPPTDDSQGGPVPPTDDSQTTPVPPTDNSQAG. Residues 583–599 show a composition bias toward polar residues; that stretch reads DDSQTTPVPPTDNSQAG.

The protein belongs to the type-B carboxylesterase/lipase family. In terms of assembly, interacts with CLC. As to expression, synthesized primarily in the pancreas and then transported to the intestine.

The protein localises to the secreted. The catalysed reaction is a triacylglycerol + H2O = a diacylglycerol + a fatty acid + H(+). It catalyses the reaction 1,2,3-tri-(9Z-octadecenoyl)-glycerol + H2O = di-(9Z)-octadecenoylglycerol + (9Z)-octadecenoate + H(+). It carries out the reaction 1,2,3-trioctanoylglycerol + H2O = dioctanoylglycerol + octanoate + H(+). The enzyme catalyses a sterol ester + H2O = a sterol + a fatty acid + H(+). The catalysed reaction is cholesteryl (9Z-octadecenoate) + H2O = cholesterol + (9Z)-octadecenoate + H(+). It catalyses the reaction an acetyl ester + H2O = an aliphatic alcohol + acetate + H(+). It carries out the reaction a butanoate ester + H2O = an aliphatic alcohol + butanoate + H(+). The enzyme catalyses 9-hexadecanoyloxy-octadecanoate + H2O = 9-hydroxy-octadecanoate + hexadecanoate + H(+). The catalysed reaction is 9-(9Z-octadecenoyloxy)-octadecanoate + H2O = 9-hydroxy-octadecanoate + (9Z)-octadecenoate + H(+). It catalyses the reaction 1-hexadecanoyl-sn-glycero-3-phosphocholine + H2O = sn-glycerol 3-phosphocholine + hexadecanoate + H(+). It carries out the reaction 12-hexadecanoyloxy-octadecanoate + H2O = 12-hydroxyoctadecanoate + hexadecanoate + H(+). The enzyme catalyses 12-(9Z-octadecenoyloxy)-octadecanoate + H2O = 12-hydroxyoctadecanoate + (9Z)-octadecenoate + H(+). The catalysed reaction is 13-(9Z-octadecenoyloxy)-octadecanoate + H2O = 13-hydroxy-octadecanoate + (9Z)-octadecenoate + H(+). It catalyses the reaction 9-(9Z-hexadecenoyloxy)-octadecanoate + H2O = (9Z)-hexadecenoate + 9-hydroxy-octadecanoate + H(+). It carries out the reaction 12-(9Z-hexadecenoyloxy)-octadecanoate + H2O = 12-hydroxyoctadecanoate + (9Z)-hexadecenoate + H(+). The enzyme catalyses 13-(9Z-hexadecenoyloxy)-octadecanoate + H2O = 13-hydroxy-octadecanoate + (9Z)-hexadecenoate + H(+). The catalysed reaction is 12-octadecanoyloxy-octadecanoate + H2O = 12-hydroxyoctadecanoate + octadecanoate + H(+). It catalyses the reaction 13-octadecanoyloxy-octadecanoate + H2O = 13-hydroxy-octadecanoate + octadecanoate + H(+). It carries out the reaction 5-(9Z-hexadecenoyloxy)-octadecanoate + H2O = 5-hydroxy-octadecanoate + (9Z)-hexadecenoate + H(+). The enzyme catalyses 9-octadecanoyloxy-octadecanoate + H2O = 9-hydroxy-octadecanoate + octadecanoate + H(+). Its activity is regulated as follows. Activated by bile salts such as sodium taurocholate. Its function is as follows. Catalyzes the hydrolysis of a wide range of substrates including cholesteryl esters, phospholipids, lysophospholipids, di- and tri-acylglycerols, and fatty acid esters of hydroxy fatty acids (FAHFA). Preferentially hydrolyzes FAHFAs with the ester bond further away from the carboxylate. Unsaturated FAHFAs are hydrolyzed more quickly than saturated FAHFAs. Has an essential role in the complete digestion of dietary lipids and their intestinal absorption, along with the absorption of fat-soluble vitamins. The protein is Bile salt-activated lipase (Cel) of Rattus norvegicus (Rat).